We begin with the raw amino-acid sequence, 431 residues long: Enolase (431 aa).

Q163 is a (2R)-2-phosphoglycerate binding site. E205 (proton donor) is an active-site residue. Mg(2+) contacts are provided by D242, E288, and D315. (2R)-2-phosphoglycerate contacts are provided by K340, R369, S370, and K391. Catalysis depends on K340, which acts as the Proton acceptor.

It belongs to the enolase family. It depends on Mg(2+) as a cofactor.

Its subcellular location is the cytoplasm. It localises to the secreted. The protein localises to the cell surface. It carries out the reaction (2R)-2-phosphoglycerate = phosphoenolpyruvate + H2O. The protein operates within carbohydrate degradation; glycolysis; pyruvate from D-glyceraldehyde 3-phosphate: step 4/5. Catalyzes the reversible conversion of 2-phosphoglycerate (2-PG) into phosphoenolpyruvate (PEP). It is essential for the degradation of carbohydrates via glycolysis. In Bacillus cereus (strain B4264), this protein is Enolase.